Here is a 191-residue protein sequence, read N- to C-terminus: Probable GTP-binding protein EngB (191 aa).

In terms of domain architecture, EngB-type G spans 13–189 (DRLEVAFAGR…RAEIVALLPD (177 aa)). GTP is bound by residues 21–28 (GRSNVGKS), 48–52 (GRTRE), 67–70 (DLPG), 134–137 (TKTD), and 168–170 (TSS). Mg(2+) is bound by residues Ser28 and Thr50.

It belongs to the TRAFAC class TrmE-Era-EngA-EngB-Septin-like GTPase superfamily. EngB GTPase family. Mg(2+) serves as cofactor.

In terms of biological role, necessary for normal cell division and for the maintenance of normal septation. The polypeptide is Probable GTP-binding protein EngB (Maricaulis maris (strain MCS10) (Caulobacter maris)).